We begin with the raw amino-acid sequence, 385 residues long: Chaperone protein DnaJ 2 (385 aa).

The J domain maps to 10 to 75 (DYYKELGVSS…AKRKEYDETR (66 aa)). The CR-type zinc finger occupies 155–233 (GVTVPLRMTS…CHGSGIQNRT (79 aa)). Positions 168, 171, 185, 188, 207, 210, 221, and 224 each coordinate Zn(2+). CXXCXGXG motif repeat units lie at residues 168 to 175 (CTTCHGSG), 185 to 192 (CPICNGTG), 207 to 214 (CDGCRGTG), and 221 to 228 (CVDCHGSG).

This sequence belongs to the DnaJ family. Homodimer. Requires Zn(2+) as cofactor.

It localises to the cytoplasm. In terms of biological role, participates actively in the response to hyperosmotic and heat shock by preventing the aggregation of stress-denatured proteins and by disaggregating proteins, also in an autonomous, DnaK-independent fashion. Unfolded proteins bind initially to DnaJ; upon interaction with the DnaJ-bound protein, DnaK hydrolyzes its bound ATP, resulting in the formation of a stable complex. GrpE releases ADP from DnaK; ATP binding to DnaK triggers the release of the substrate protein, thus completing the reaction cycle. Several rounds of ATP-dependent interactions between DnaJ, DnaK and GrpE are required for fully efficient folding. Also involved, together with DnaK and GrpE, in the DNA replication of plasmids through activation of initiation proteins. This Nocardia farcinica (strain IFM 10152) protein is Chaperone protein DnaJ 2.